Here is a 110-residue protein sequence, read N- to C-terminus: Antimicrobial peptide microplusin (110 aa).

Positions 1–20 (MKAIFVSALLVVALVASTSA) are cleaved as a signal peptide. Intrachain disulfides connect C26/C72, C39/C100, and C61/C66.

As to expression, expressed in the hemocytes, fat body and ovaries.

Its subcellular location is the secreted. Has bacteriostatic activity against the Gram-positive bacterium M.luteus, but not against Gram-negative bacterium E.coli SBS363. Has fungistatic activity against C.neoformans, but not C.albicans. Binds and sequesters copper and iron ions. Copper-chelating is crucial for antimicrobial activity against M.luteus. This chain is Antimicrobial peptide microplusin, found in Rhipicephalus microplus (Cattle tick).